A 719-amino-acid chain; its full sequence is MWWWRRRFWRPKRRWRWRRRRRRPLARRRRRPARLARRPRVRRRRFQWGRPRRYRPRRRRRRRKRQKIKLKQWNPAVTKFCRIIGYYPLIICGEGTTVRNYNVHSQDYVQYESYGGGMTTTMFNLKVPYEQFQLHQNFWTRSNIDLDLVRYHSVKFTFFRHPKVDFIVKFNRNPPFTDSVLTGPMLHPGVLMNSKRKILIPSWETRPRGKKRIPVRIGPPRLFTDHWYFQRDFCGVPLLTVNATACNLRYPFGSPQTKNICIYFLVLASIYNDKVSIAKDEVTKNYDTLVDAIKKSPQGLTVFNTFKTQEHMQEPSSETCKETQKTNPPFKYENLSSLWGDKIYKESTFNSFKTNAENLWKARSKHTLLGSKELNFKTGMYSAIFLTNGRLSPDYPGIYIEVVYNPLLGQGEGNMIWLEWCPKKTKQYNERQCYNLIQHVPLWAAIHGYMDFCKKTFKDNNLDKNTRVVLICPYTRPQLYNPQKPDWGYVPYDYNFAQTKMPDGNGYIPEFYRFRWYPSGFHQQNWMNDLDQCGPFSHRGEEKMATLTSKYNFKFTWGGNPIFQQTVKDPCKQSTFDIPGAGGIPRPIQIVNPKYLDPGITFHRWDLRRGFFGPAAVKRMQAESTDALFPTTGPKRPRTEVPVAVAGDALPSRERKRQAWQDSTSEETESEAEAQEEKTLQEQLQQQLKEQRQLRCGIQYMFQQLTKTQLHLHVPPIPQ.

The disordered stretch occupies residues 647–678 (GDALPSRERKRQAWQDSTSEETESEAEAQEEK). Residues 664-674 (TSEETESEAEA) are compositionally biased toward acidic residues.

It belongs to the anelloviridae capsid protein family.

The protein resides in the virion. In terms of biological role, self assemble to form an icosahedral capsid. The polypeptide is Capsid protein (Torque teno virus (isolate Human/Germany/KAV/2001) (TTV)).